A 256-amino-acid chain; its full sequence is Small ribosomal subunit protein uS2 (256 aa).

This sequence belongs to the universal ribosomal protein uS2 family.

The polypeptide is Small ribosomal subunit protein uS2 (Brucella abortus (strain S19)).